A 321-amino-acid chain; its full sequence is Mitochondrial thiamine pyrophosphate carrier 1 (321 aa).

Transmembrane regions (helical) follow at residues 12-28 (GTRR…GLVS), 91-107 (LMYV…YRTT), 126-146 (FVAG…LDLL), 184-200 (AAVG…FATY), 221-237 (AAGV…MFPL), and 284-301 (GLTV…VTMW). Solcar repeat units lie at residues 12 to 110 (GTRR…TTQA), 120 to 206 (PPSA…LRPP), and 214 to 309 (PFGS…SLRL).

The protein belongs to the mitochondrial carrier (TC 2.A.29) family.

It is found in the mitochondrion inner membrane. Mitochondrial transporter that mediates uptake of thiamine pyrophosphate (ThPP) into mitochondria. In Aspergillus niger (strain ATCC MYA-4892 / CBS 513.88 / FGSC A1513), this protein is Mitochondrial thiamine pyrophosphate carrier 1 (tpc1).